We begin with the raw amino-acid sequence, 420 residues long: Tyrosine--tRNA ligase (420 aa).

Tyr-33 serves as a coordination point for L-tyrosine. A 'HIGH' region motif is present at residues 38–47 (PTADSLHVGH). The L-tyrosine site is built by Tyr-167 and Gln-171. The 'KMSKS' region signature appears at 227–231 (KFGKT). Residue Lys-230 coordinates ATP. One can recognise an S4 RNA-binding domain in the interval 353-419 (LTVADLLVKV…GKRNYALVKV (67 aa)).

It belongs to the class-I aminoacyl-tRNA synthetase family. TyrS type 1 subfamily. Homodimer.

It is found in the cytoplasm. It catalyses the reaction tRNA(Tyr) + L-tyrosine + ATP = L-tyrosyl-tRNA(Tyr) + AMP + diphosphate + H(+). Functionally, catalyzes the attachment of tyrosine to tRNA(Tyr) in a two-step reaction: tyrosine is first activated by ATP to form Tyr-AMP and then transferred to the acceptor end of tRNA(Tyr). In Anaeromyxobacter dehalogenans (strain 2CP-C), this protein is Tyrosine--tRNA ligase.